The chain runs to 238 residues: DNA repair protein RecO (238 aa).

The protein belongs to the RecO family.

Its function is as follows. Involved in DNA repair and RecF pathway recombination. In Hahella chejuensis (strain KCTC 2396), this protein is DNA repair protein RecO.